We begin with the raw amino-acid sequence, 300 residues long: Bifunctional protein FolD 2 (300 aa).

Residues 165-167 (GRS), Ser-190, and Ile-231 contribute to the NADP(+) site.

It belongs to the tetrahydrofolate dehydrogenase/cyclohydrolase family. In terms of assembly, homodimer.

It carries out the reaction (6R)-5,10-methylene-5,6,7,8-tetrahydrofolate + NADP(+) = (6R)-5,10-methenyltetrahydrofolate + NADPH. The enzyme catalyses (6R)-5,10-methenyltetrahydrofolate + H2O = (6R)-10-formyltetrahydrofolate + H(+). Its pathway is one-carbon metabolism; tetrahydrofolate interconversion. In terms of biological role, catalyzes the oxidation of 5,10-methylenetetrahydrofolate to 5,10-methenyltetrahydrofolate and then the hydrolysis of 5,10-methenyltetrahydrofolate to 10-formyltetrahydrofolate. This Pseudomonas syringae pv. syringae (strain B728a) protein is Bifunctional protein FolD 2.